Reading from the N-terminus, the 37-residue chain is Large ribosomal subunit protein bL36c (37 aa).

This sequence belongs to the bacterial ribosomal protein bL36 family.

It is found in the plastid. Its subcellular location is the chloroplast. The chain is Large ribosomal subunit protein bL36c from Vitis vinifera (Grape).